A 408-amino-acid polypeptide reads, in one-letter code: MEPSPSSPPSSPPEILDLDSIKALKILGKGATGTVFLAHDVVSTSSSSSPFAVKLVPKSSASSLRRARWEIEVLRRLSVDSNQNPFLPRLLASFESPEYFAWAVPYCSGGDLNVLLHRQNDGVFSSSVIRFYVAEIVCALEHLHTMGIAYRDLKPENILIQQSGHVTLTDFDLSRSLKKPLRPHFYQPDPELIIDRKKSRSFSRLISPTAEKNKTGLKKTRSARVNPINRRKTSFSSGERSNSFVGTDEYVSPEVIRGDGHDFAVDWWALGVLTYEMMYGETPFKGKSKKETFRNVLMKEPEFAGKPNDLTDLIRRLLVKDPNRRLGCHRGAAEIKELAFFAGVRWDLLTEVLRPPFIPLRDDGELTVGGFDIREHFEKLRTTPSSAPPSPLRSPPHVCRKNDPFIEF.

A Protein kinase domain is found at 21–341 (IKALKILGKG…AAEIKELAFF (321 aa)). ATP is bound by residues 27-35 (LGKGATGTV) and Lys-54. The active-site Proton acceptor is the Asp-152. One can recognise an AGC-kinase C-terminal domain in the interval 342–408 (AGVRWDLLTE…CRKNDPFIEF (67 aa)).

Belongs to the protein kinase superfamily. AGC Ser/Thr protein kinase family. Expressed in the epidermis and cortex of the transition zone of the root apex. Expressed in rosette leaves, stems, flowers and siliques.

Its subcellular location is the cytoplasm. It is found in the nucleus. The catalysed reaction is L-seryl-[protein] + ATP = O-phospho-L-seryl-[protein] + ADP + H(+). It catalyses the reaction L-threonyl-[protein] + ATP = O-phospho-L-threonyl-[protein] + ADP + H(+). Its function is as follows. Regulates planar ovule integument development. In Arabidopsis thaliana (Mouse-ear cress), this protein is Serine/threonine-protein kinase UCNL.